Reading from the N-terminus, the 387-residue chain is Phosphoglycerate kinase (387 aa).

Substrate-binding positions include 21 to 23 (DLN), arginine 36, 59 to 62 (HLGR), arginine 113, and arginine 146. ATP contacts are provided by residues lysine 197, glutamate 314, and 340 to 343 (GGDT).

Belongs to the phosphoglycerate kinase family. Monomer.

It localises to the cytoplasm. The enzyme catalyses (2R)-3-phosphoglycerate + ATP = (2R)-3-phospho-glyceroyl phosphate + ADP. The protein operates within carbohydrate degradation; glycolysis; pyruvate from D-glyceraldehyde 3-phosphate: step 2/5. The polypeptide is Phosphoglycerate kinase (Pseudomonas putida (strain ATCC 47054 / DSM 6125 / CFBP 8728 / NCIMB 11950 / KT2440)).